Here is a 206-residue protein sequence, read N- to C-terminus: Dephospho-CoA kinase (206 aa).

The 201-residue stretch at 4–204 (IVGLTGGIGS…QFYLQQAENK (201 aa)) folds into the DPCK domain. 12–17 (GSGKTT) serves as a coordination point for ATP.

This sequence belongs to the CoaE family.

The protein localises to the cytoplasm. The catalysed reaction is 3'-dephospho-CoA + ATP = ADP + CoA + H(+). The protein operates within cofactor biosynthesis; coenzyme A biosynthesis; CoA from (R)-pantothenate: step 5/5. Its function is as follows. Catalyzes the phosphorylation of the 3'-hydroxyl group of dephosphocoenzyme A to form coenzyme A. This Haemophilus influenzae (strain ATCC 51907 / DSM 11121 / KW20 / Rd) protein is Dephospho-CoA kinase.